A 380-amino-acid chain; its full sequence is Endopolygalacturonase AN8327 (380 aa).

Residues 1–19 form the signal peptide; sequence MFYALGPLALFAFATEVMA. A propeptide spanning residues 20–35 is cleaved from the precursor; sequence TPVAYPMTTASPTLAK. A disulfide bridge links C39 with C57. PbH1 repeat units follow at residues 147-169, 170-200, 201-222, 223-243, 252-273, 281-303, and 315-338; these read LTDSTIQNLYIENTPVQAVSING, CDGLTITDMTIDNSAGDDAGGHNTDGFDIGE, SSNVVITGAKVYNQDDCVAVNS, GTSITFSGGTCSGGHGLSIGS, VDTVTFKDSTVSNSVNGIRIKA, IKGVTYSGISLESISDYGILIEQ, and TSGIPITDLTIENISGSGAVDSDG. D215 functions as the Proton donor in the catalytic mechanism. C217 and C233 form a disulfide bridge. H237 is an active-site residue. N-linked (GlcNAc...) asparagine glycosylation is present at N327. An intrachain disulfide couples C345 to C350. N352 is a glycosylation site (N-linked (GlcNAc...) asparagine). The cysteines at positions 369 and 378 are disulfide-linked.

Belongs to the glycosyl hydrolase 28 family.

The protein resides in the secreted. It catalyses the reaction (1,4-alpha-D-galacturonosyl)n+m + H2O = (1,4-alpha-D-galacturonosyl)n + (1,4-alpha-D-galacturonosyl)m.. In terms of biological role, involved in maceration and soft-rotting of plant tissue. Hydrolyzes the 1,4-alpha glycosidic bonds of de-esterified pectate in the smooth region of the plant cell wall. In Emericella nidulans (strain FGSC A4 / ATCC 38163 / CBS 112.46 / NRRL 194 / M139) (Aspergillus nidulans), this protein is Endopolygalacturonase AN8327.